The following is a 234-amino-acid chain: Phosphoribosylaminoimidazole-succinocarboxamide synthase (234 aa).

Belongs to the SAICAR synthetase family.

It carries out the reaction 5-amino-1-(5-phospho-D-ribosyl)imidazole-4-carboxylate + L-aspartate + ATP = (2S)-2-[5-amino-1-(5-phospho-beta-D-ribosyl)imidazole-4-carboxamido]succinate + ADP + phosphate + 2 H(+). It functions in the pathway purine metabolism; IMP biosynthesis via de novo pathway; 5-amino-1-(5-phospho-D-ribosyl)imidazole-4-carboxamide from 5-amino-1-(5-phospho-D-ribosyl)imidazole-4-carboxylate: step 1/2. The polypeptide is Phosphoribosylaminoimidazole-succinocarboxamide synthase (Streptococcus pyogenes serotype M3 (strain ATCC BAA-595 / MGAS315)).